We begin with the raw amino-acid sequence, 431 residues long: Trigger factor (431 aa).

The 86-residue stretch at 163–248 (GDTVVIDYAG…IHEVKGKELP (86 aa)) folds into the PPIase FKBP-type domain.

Belongs to the FKBP-type PPIase family. Tig subfamily.

The protein localises to the cytoplasm. The enzyme catalyses [protein]-peptidylproline (omega=180) = [protein]-peptidylproline (omega=0). Its function is as follows. Involved in protein export. Acts as a chaperone by maintaining the newly synthesized protein in an open conformation. Functions as a peptidyl-prolyl cis-trans isomerase. The protein is Trigger factor of Latilactobacillus sakei subsp. sakei (strain 23K) (Lactobacillus sakei subsp. sakei).